Reading from the N-terminus, the 112-residue chain is Large ribosomal subunit protein eL30 (112 aa).

It belongs to the eukaryotic ribosomal protein eL30 family.

This Euphorbia esula (Leafy spurge) protein is Large ribosomal subunit protein eL30 (RPL30).